The chain runs to 336 residues: Holliday junction branch migration complex subunit RuvB (336 aa).

The large ATPase domain (RuvB-L) stretch occupies residues 1–175 (MEKYSFESVQ…FGMSFRLQFY (175 aa)). ATP contacts are provided by residues leucine 14, arginine 15, glycine 56, lysine 59, threonine 60, threonine 61, 122–124 (EDF), arginine 165, tyrosine 175, and arginine 212. Mg(2+) is bound at residue threonine 60. Residues 176-253 (EPKELSAIVI…CVRYALNELG (78 aa)) form a small ATPAse domain (RuvB-S) region. Positions 256 to 336 (ELGFDELDLR…IPFLEQKGLF (81 aa)) are head domain (RuvB-H). DNA contacts are provided by arginine 310 and arginine 315.

The protein belongs to the RuvB family. As to quaternary structure, homohexamer. Forms an RuvA(8)-RuvB(12)-Holliday junction (HJ) complex. HJ DNA is sandwiched between 2 RuvA tetramers; dsDNA enters through RuvA and exits via RuvB. An RuvB hexamer assembles on each DNA strand where it exits the tetramer. Each RuvB hexamer is contacted by two RuvA subunits (via domain III) on 2 adjacent RuvB subunits; this complex drives branch migration. In the full resolvosome a probable DNA-RuvA(4)-RuvB(12)-RuvC(2) complex forms which resolves the HJ.

It localises to the cytoplasm. It carries out the reaction ATP + H2O = ADP + phosphate + H(+). In terms of biological role, the RuvA-RuvB-RuvC complex processes Holliday junction (HJ) DNA during genetic recombination and DNA repair, while the RuvA-RuvB complex plays an important role in the rescue of blocked DNA replication forks via replication fork reversal (RFR). RuvA specifically binds to HJ cruciform DNA, conferring on it an open structure. The RuvB hexamer acts as an ATP-dependent pump, pulling dsDNA into and through the RuvAB complex. RuvB forms 2 homohexamers on either side of HJ DNA bound by 1 or 2 RuvA tetramers; 4 subunits per hexamer contact DNA at a time. Coordinated motions by a converter formed by DNA-disengaged RuvB subunits stimulates ATP hydrolysis and nucleotide exchange. Immobilization of the converter enables RuvB to convert the ATP-contained energy into a lever motion, pulling 2 nucleotides of DNA out of the RuvA tetramer per ATP hydrolyzed, thus driving DNA branch migration. The RuvB motors rotate together with the DNA substrate, which together with the progressing nucleotide cycle form the mechanistic basis for DNA recombination by continuous HJ branch migration. Branch migration allows RuvC to scan DNA until it finds its consensus sequence, where it cleaves and resolves cruciform DNA. The polypeptide is Holliday junction branch migration complex subunit RuvB (Helicobacter hepaticus (strain ATCC 51449 / 3B1)).